Consider the following 576-residue polypeptide: Arginine--tRNA ligase (576 aa).

The 'HIGH' region signature appears at 122–132 (PNVAKEMHVGH).

Belongs to the class-I aminoacyl-tRNA synthetase family. As to quaternary structure, monomer.

It localises to the cytoplasm. It carries out the reaction tRNA(Arg) + L-arginine + ATP = L-arginyl-tRNA(Arg) + AMP + diphosphate. This chain is Arginine--tRNA ligase, found in Pectobacterium carotovorum subsp. carotovorum (strain PC1).